The primary structure comprises 709 residues: Anillin-like protein 3 (709 aa).

The region spanning 584 to 705 (DMEYRGFLHI…WLSAINDTLD (122 aa)) is the PH domain.

The protein is Anillin-like protein 3 (ani-3) of Caenorhabditis elegans.